Reading from the N-terminus, the 169-residue chain is Crossover junction endodeoxyribonuclease RuvC (169 aa).

Residues Asp11, Glu71, and Asp143 contribute to the active site. Mg(2+) contacts are provided by Asp11, Glu71, and Asp143.

The protein belongs to the RuvC family. Homodimer which binds Holliday junction (HJ) DNA. The HJ becomes 2-fold symmetrical on binding to RuvC with unstacked arms; it has a different conformation from HJ DNA in complex with RuvA. In the full resolvosome a probable DNA-RuvA(4)-RuvB(12)-RuvC(2) complex forms which resolves the HJ. It depends on Mg(2+) as a cofactor.

It localises to the cytoplasm. The enzyme catalyses Endonucleolytic cleavage at a junction such as a reciprocal single-stranded crossover between two homologous DNA duplexes (Holliday junction).. Its function is as follows. The RuvA-RuvB-RuvC complex processes Holliday junction (HJ) DNA during genetic recombination and DNA repair. Endonuclease that resolves HJ intermediates. Cleaves cruciform DNA by making single-stranded nicks across the HJ at symmetrical positions within the homologous arms, yielding a 5'-phosphate and a 3'-hydroxyl group; requires a central core of homology in the junction. The consensus cleavage sequence is 5'-(A/T)TT(C/G)-3'. Cleavage occurs on the 3'-side of the TT dinucleotide at the point of strand exchange. HJ branch migration catalyzed by RuvA-RuvB allows RuvC to scan DNA until it finds its consensus sequence, where it cleaves and resolves the cruciform DNA. This chain is Crossover junction endodeoxyribonuclease RuvC, found in Rhizobium johnstonii (strain DSM 114642 / LMG 32736 / 3841) (Rhizobium leguminosarum bv. viciae).